The sequence spans 353 residues: Galectin-9 (353 aa).

A Galectin 1 domain is found at Phe-17–Gln-147. A beta-D-galactoside contacts are provided by residues Asn-47, His-60, Arg-64, Asn-74, and Trp-81–Lys-87. The interval Gln-167 to His-186 is disordered. Positions Phe-225–Thr-353 constitute a Galectin 2 domain. A beta-D-galactoside-binding positions include His-265, Arg-269, Thr-279, and Trp-285 to Ser-291.

Homodimer. Accentuated expression in liver and thymus of embryo, detected in embryonic heart, brain, lung, liver, and kidney. Highly expressed in adult thymus, small intestine, and liver, and to a lesser extent in lung, kidney, spleen, cardiac, and skeletal muscle. Barely detectable in brain and reticulocyte. Expressed in placenta, uterus and decidua during pregnancy. Expressed in CD4+ T-cells with higher levels in iTreg cells than other T-cell types and sustained high levels throughout iTreg cell differentiation (at protein level). Expressed in myeloid cells in lung. Constitutively expressed in microglia. Isoform 1 is expressed exclusively in the small intestine. Isoform 2 expression in decidua increases in pathological pregnancy from gestation day 7.5 to 13.5 and it is higher than in normal pregnancy. Isoform 3 expression in decidua is higher in normal pregnancy than in pathological pregnancy.

The protein resides in the cytoplasm. Its subcellular location is the nucleus. The protein localises to the secreted. In terms of biological role, binds galactosides. Has high affinity for the Forssman pentasaccharide. Ligand for HAVCR2/TIM3. Binding to HAVCR2 induces T-helper type 1 lymphocyte (Th1) death. Also stimulates bactericidal activity in infected macrophages by causing macrophage activation and IL1B secretion which restricts intracellular bacterial growth. Ligand for P4HB; the interaction retains P4HB at the cell surface of Th2 T-helper cells, increasing disulfide reductase activity at the plasma membrane, altering the plasma membrane redox state and enhancing cell migration. Ligand for CD44; the interaction enhances binding of SMAD3 to the FOXP3 promoter, leading to up-regulation of FOXP3 expression and increased induced regulatory T (iTreg) cell stability and suppressive function. Promotes ability of mesenchymal stromal cells to suppress T-cell proliferation. Expands regulatory T-cells and induces cytotoxic T-cell apoptosis following virus infection. Activates ERK1/2 phosphorylation inducing cytokine (IL-6, IL-8, IL-12) and chemokine (CCL2) production in mast and dendritic cells. Inhibits degranulation and induces apoptosis of mast cells. Induces maturation and migration of dendritic cells. Inhibits natural killer (NK) cell function. Can transform NK cell phenotype from peripheral to decidual during pregnancy. Astrocyte derived galectin-9 enhances microglial TNF production. May play a role in thymocyte-epithelial interactions relevant to the biology of the thymus. May provide the molecular basis for urate flux across cell membranes, allowing urate that is formed during purine metabolism to efflux from cells and serving as an electrogenic transporter that plays an important role in renal and gastrointestinal urate excretion. Highly selective to the anion urate. Acts as an eosinophil chemoattractant. It also inhibits angiogenesis. Suppresses IFNG production by natural killer cells. In Mus musculus (Mouse), this protein is Galectin-9 (Lgals9).